Here is a 216-residue protein sequence, read N- to C-terminus: MGAARLLPNLTLCLQLLILCCQTQGENHPSPNFNQYVRDQGAMTDQLSRRQIREYQLYSRTSGKHVQVTGRRISATAEDGNKFAKLIVETDTFGSRVRIKGAESEKYICMNKRGKLIGKPSGKSKDCVFTEIVLENNYTAFQNARHEGWFMAFTRQGRPRQASRSRQNQREAHFIKRLYQGQLPFPNHAERQKQFEFVGSAPTRRTKRTRRPQSQT.

The first 22 residues, 1–22, serve as a signal peptide directing secretion; the sequence is MGAARLLPNLTLCLQLLILCCQ. Asparagine 137 is a glycosylation site (N-linked (GlcNAc...) asparagine). A disordered region spans residues 195–216; sequence FEFVGSAPTRRTKRTRRPQSQT. The segment covering 204–216 has biased composition (basic residues); it reads RRTKRTRRPQSQT.

It belongs to the heparin-binding growth factors family. As to quaternary structure, interacts with FGFR3 and FGFR4.

It is found in the secreted. In terms of biological role, plays an important role in the regulation of embryonic development and as signaling molecule in the induction and patterning of the embryonic brain. Required for normal brain development. This Mus musculus (Mouse) protein is Fibroblast growth factor 17 (Fgf17).